A 1060-amino-acid polypeptide reads, in one-letter code: Outer capsid protein VP2 (1060 aa).

Belongs to the orbivirus VP2 family.

The protein resides in the virion. The VP2 protein is one of the two proteins (with VP5) which constitute the virus particle outer capsid. It is the major target of the host immunogenic response. The protein is Outer capsid protein VP2 (Segment-2) of Camelus dromedarius (Dromedary).